Reading from the N-terminus, the 1721-residue chain is Ras guanine nucleotide exchange factor R (1721 aa).

A coiled-coil region spans residues 148 to 279 (QLEDEVDLVH…LQQQQQQQRS (132 aa)). Disordered stretches follow at residues 213–232 (QQQK…KEEK), 445–515 (SSLG…NQQP), 551–701 (ATTT…VDKQ), 716–766 (RTPL…KSPS), 797–837 (TITI…TPNK), and 929–981 (DEVS…DPVS). A compositionally biased stretch (basic and acidic residues) spans 216–232 (KHQEEKEKNDQKEKEEK). Composition is skewed to low complexity over residues 454 to 469 (SPEK…STSE), 479 to 493 (HNNN…STNN), 501 to 515 (PSLS…NQQP), and 551 to 581 (ATTT…LSIS). The segment covering 618 to 627 (NGTTSPRNNE) has biased composition (polar residues). 2 stretches are compositionally biased toward low complexity: residues 628 to 651 (SSVT…VNTI) and 663 to 686 (TPTT…SQND). Over residues 687–701 (KQNENNNKENFVDKQ) the composition is skewed to basic and acidic residues. Composition is skewed to low complexity over residues 724 to 748 (SSNS…TNSS), 797 to 836 (TITI…TTPN), and 933 to 952 (ESSS…NTPS). Positions 802-831 (NNNNNNNNNNNNNNNNNNNIQQQQQQQQQI) form a coiled coil. Polar residues predominate over residues 968–978 (NLSSINNSSYD). One can recognise an N-terminal Ras-GEF domain in the interval 1291-1411 (GRYVPKAGTL…ILGGLIKKKE (121 aa)). Positions 1447–1676 (NESEIARQLT…YQLSLIREPR (230 aa)) constitute a Ras-GEF domain.

Post-translationally, phosphorylated on threonine residues.

Promotes the exchange of Ras-bound GDP by GTP. May also play a role in the activation of rasG. The polypeptide is Ras guanine nucleotide exchange factor R (gefR) (Dictyostelium discoideum (Social amoeba)).